A 250-amino-acid polypeptide reads, in one-letter code: Aquaporin TIP2-1 (250 aa).

Met1 bears the N-acetylmethionine mark. The Cytoplasmic segment spans residues 1 to 20; the sequence is MAGVAFGSFDDSFSLASLRA. Ala2 carries the N-acetylalanine; in Aquaporin TIP2-1, N-terminally processed modification. The helical transmembrane segment at 21–41 threads the bilayer; it reads YLAEFISTLLFVFAGVGSAIA. The Vacuolar segment spans residues 42–54; that stretch reads YAKLTSDAALDTP. The helical transmembrane segment at 55–75 threads the bilayer; sequence GLVAIAVCHGFALFVAVAIGA. The Cytoplasmic segment spans residues 76–98; that stretch reads NISGGHVNPAVTFGLAVGGQITV. Positions 83 to 85 match the NPA 1 motif; sequence NPA. Residues 99–119 form a helical membrane-spanning segment; the sequence is ITGVFYWIAQLLGSTAACFLL. Residues 120 to 141 are Vacuolar-facing; sequence KYVTGGLAVPTHSVAAGLGSIE. A helical transmembrane segment spans residues 142 to 162; that stretch reads GVVMEIIITFALVYTVYATAA. Topologically, residues 163 to 168 are cytoplasmic; the sequence is DPKKGS. A helical transmembrane segment spans residues 169 to 189; that stretch reads LGTIAPLAIGLIVGANILAAG. Topologically, residues 190-215 are vacuolar; sequence PFSGGSMNPARSFGPAVAAGDFSGHW. Residues 197–199 carry the NPA 2 motif; sequence NPA. Residues 216–236 form a helical membrane-spanning segment; it reads VYWVGPLIGGGLAGLIYGNVF. Residues 237–250 lie on the Cytoplasmic side of the membrane; that stretch reads MGSSEHVPLASADF.

This sequence belongs to the MIP/aquaporin (TC 1.A.8) family. TIP (TC 1.A.8.10) subfamily. As to quaternary structure, interacts with cucumber mosaic virus (CMV) Protein 1a. In terms of tissue distribution, strongly expressed in shoot, rosette, bolt and flowers. Also expressed in roots, flower buds and above ground.

The protein resides in the vacuole membrane. Its function is as follows. Aquaporin required to facilitate the transport of water from the vacuolar compartment to the cytoplasm. Does not promote glycerol permeability. Its function is impaired by Hg(2+). Transports urea in yeast cells and Xenopus laevis oocytes in a pH-independent manner. Transports methylammonium or ammonium in yeast cells and Xenopus laevis oocytes, preferentially at high medium pH. May participate in vacuolar compartmentation and detoxification of ammonium. This is Aquaporin TIP2-1 (TIP2-1) from Arabidopsis thaliana (Mouse-ear cress).